The sequence spans 474 residues: tRNA-2-methylthio-N(6)-dimethylallyladenosine synthase (474 aa).

The MTTase N-terminal domain occupies 3 to 120 (KKLHIKTWGC…LPEMINSVRG (118 aa)). [4Fe-4S] cluster-binding residues include C12, C49, C83, C157, C161, and C164. The Radical SAM core domain occupies 143–378 (RADGPSAFVS…INQQVTAWSR (236 aa)). Positions 378-441 (RRMLGTTQRI…TNSMRGKVVR (64 aa)) constitute a TRAM domain.

This sequence belongs to the methylthiotransferase family. MiaB subfamily. Monomer. The cofactor is [4Fe-4S] cluster.

The protein resides in the cytoplasm. It catalyses the reaction N(6)-dimethylallyladenosine(37) in tRNA + (sulfur carrier)-SH + AH2 + 2 S-adenosyl-L-methionine = 2-methylsulfanyl-N(6)-dimethylallyladenosine(37) in tRNA + (sulfur carrier)-H + 5'-deoxyadenosine + L-methionine + A + S-adenosyl-L-homocysteine + 2 H(+). Its function is as follows. Catalyzes the methylthiolation of N6-(dimethylallyl)adenosine (i(6)A), leading to the formation of 2-methylthio-N6-(dimethylallyl)adenosine (ms(2)i(6)A) at position 37 in tRNAs that read codons beginning with uridine. The protein is tRNA-2-methylthio-N(6)-dimethylallyladenosine synthase of Enterobacter sp. (strain 638).